We begin with the raw amino-acid sequence, 320 residues long: MVTVVDRVTSRRLRHPEKMHRPDTSIQKKPDWIRVKAPTSKIYKETYDIVRAHKLVTVCEEAGCPNVGECWSQRHASFMILGEICTRACAFCNVATGIPLAVDDNEPERVADAVAQMELKHVVITSVDRDDLADGGAQHFAKVIYAIRRKAPKTTIEVLTPDFRHKDGALEIVVAAKPDVFNHNLETVPSKYLKVRPGARYFHSIRLLQRVKELDPTIFTKSGIMVGLGEERNEILQLMDDLRSADVDFMTIGQYLQPTRKHHPVIRFFPPEEFESFAKIGKVKGFLHMASNPLTRSSHHAGDDFAILQKARDEKFALQR.

Residues 1–26 are disordered; sequence MVTVVDRVTSRRLRHPEKMHRPDTSI. Residues Cys-59, Cys-64, Cys-70, Cys-85, Cys-89, Cys-92, and Ser-298 each coordinate [4Fe-4S] cluster. A Radical SAM core domain is found at 71 to 287; sequence WSQRHASFMI…AKIGKVKGFL (217 aa).

This sequence belongs to the radical SAM superfamily. Lipoyl synthase family. [4Fe-4S] cluster is required as a cofactor.

It localises to the cytoplasm. It catalyses the reaction [[Fe-S] cluster scaffold protein carrying a second [4Fe-4S](2+) cluster] + N(6)-octanoyl-L-lysyl-[protein] + 2 oxidized [2Fe-2S]-[ferredoxin] + 2 S-adenosyl-L-methionine + 4 H(+) = [[Fe-S] cluster scaffold protein] + N(6)-[(R)-dihydrolipoyl]-L-lysyl-[protein] + 4 Fe(3+) + 2 hydrogen sulfide + 2 5'-deoxyadenosine + 2 L-methionine + 2 reduced [2Fe-2S]-[ferredoxin]. Its pathway is protein modification; protein lipoylation via endogenous pathway; protein N(6)-(lipoyl)lysine from octanoyl-[acyl-carrier-protein]: step 2/2. In terms of biological role, catalyzes the radical-mediated insertion of two sulfur atoms into the C-6 and C-8 positions of the octanoyl moiety bound to the lipoyl domains of lipoate-dependent enzymes, thereby converting the octanoylated domains into lipoylated derivatives. This chain is Lipoyl synthase, found in Bartonella quintana (strain Toulouse) (Rochalimaea quintana).